The following is a 190-amino-acid chain: Lysozyme g (190 aa).

The segment covering 1-10 has biased composition (basic and acidic residues); the sequence is MPYGKIEDIK. The segment at 1-31 is disordered; the sequence is MPYGKIEDIKTSGASDVTAAQDGLKEGGWKS. Residues Glu-71 and Asp-84 contribute to the active site.

It belongs to the glycosyl hydrolase 23 family.

The catalysed reaction is Hydrolysis of (1-&gt;4)-beta-linkages between N-acetylmuramic acid and N-acetyl-D-glucosamine residues in a peptidoglycan and between N-acetyl-D-glucosamine residues in chitodextrins.. This is Lysozyme g from Takifugu rubripes (Japanese pufferfish).